Reading from the N-terminus, the 480-residue chain is Acetyl-coenzyme A carboxylase carboxyl transferase subunit beta, chloroplastic (480 aa).

Residues 25 to 48 (TSSLGPIENASESKDPNINDTDKN) are disordered. A compositionally biased stretch (basic and acidic residues) spans 35–47 (SESKDPNINDTDK). Residues 216–480 (LWVQCENCYG…LHTFFPLNQN (265 aa)) form the CoA carboxyltransferase N-terminal domain. Zn(2+)-binding residues include C220, C223, C239, and C242. The C4-type zinc finger occupies 220 to 242 (CENCYGLNYKKFFKSKMNLCEQC).

Belongs to the AccD/PCCB family. As to quaternary structure, acetyl-CoA carboxylase is a heterohexamer composed of biotin carboxyl carrier protein, biotin carboxylase and 2 subunits each of ACCase subunit alpha and ACCase plastid-coded subunit beta (accD). Zn(2+) serves as cofactor.

It is found in the plastid. The protein localises to the chloroplast stroma. The catalysed reaction is N(6)-carboxybiotinyl-L-lysyl-[protein] + acetyl-CoA = N(6)-biotinyl-L-lysyl-[protein] + malonyl-CoA. It participates in lipid metabolism; malonyl-CoA biosynthesis; malonyl-CoA from acetyl-CoA: step 1/1. Component of the acetyl coenzyme A carboxylase (ACC) complex. Biotin carboxylase (BC) catalyzes the carboxylation of biotin on its carrier protein (BCCP) and then the CO(2) group is transferred by the transcarboxylase to acetyl-CoA to form malonyl-CoA. The sequence is that of Acetyl-coenzyme A carboxylase carboxyl transferase subunit beta, chloroplastic from Helianthus annuus (Common sunflower).